Here is a 1360-residue protein sequence, read N- to C-terminus: Activating molecule in BECN1-regulated autophagy protein 1B (1360 aa).

WD repeat units lie at residues 50 to 89, 92 to 132, and 134 to 174; these read DNPR…CLHS, GHRR…ESWF, and ESNV…AVVK. A compositionally biased stretch (polar residues) spans 249–258; the sequence is RSSGAQANDQ. 7 disordered regions span residues 249–277, 315–364, 412–490, 514–573, 587–616, 664–688, and 754–796; these read RSSG…FQYP, PTGL…NSAH, GVET…QRNN, ELER…RCRS, WERS…EDPG, PTVS…NPDE, and TLSN…MPRN. Residues 319–333 show a composition bias toward low complexity; the sequence is QPSDSTQPQTQSGPS. Residues 350-361 show a composition bias toward polar residues; sequence AFSSVFSGTAGN. Low complexity predominate over residues 428-437; sequence SSSSMDLLSL. 2 stretches are compositionally biased toward polar residues: residues 443–454 and 473–490; these read GSSSSPIYTSAT and DGTS…QRNN. The span at 590 to 607 shows a compositional bias: low complexity; that stretch reads SGQTSSSSSSQEGPSWPL. The span at 754–768 shows a compositional bias: polar residues; the sequence is TLSNSQADSQSNNPS. Over residues 775-784 the composition is skewed to acidic residues; that stretch reads SDGDYEDIEE. 2 short sequence motifs (TQT motif) span residues 1109-1111 and 1121-1123; these read TQT. Disordered stretches follow at residues 1120 to 1142 and 1241 to 1360; these read ETQT…TSRH and SQTS…LYGR. Composition is skewed to polar residues over residues 1129–1142 and 1241–1252; these read SAST…TSRH and SQTSVRTAQGGN. The segment covering 1278–1288 has biased composition (low complexity); the sequence is APGPSGSSGAP. The segment covering 1311–1321 has biased composition (basic and acidic residues); it reads FGDRQPDDVQR. Low complexity predominate over residues 1329-1347; it reads NMSNHSNNNNNDHSNSYSE. The segment covering 1348–1360 has biased composition (basic and acidic residues); the sequence is SRSRDYPDDLYGR.

Belongs to the WD repeat AMBRA1 family. In terms of assembly, component of the DCX(AMBRA1) E3 ubiquitin ligase complex.

The protein resides in the endoplasmic reticulum. It localises to the cytoplasm. It is found in the cytoskeleton. Its subcellular location is the cytoplasmic vesicle. The protein localises to the autophagosome. The protein resides in the mitochondrion. It localises to the cytosol. It is found in the nucleus. Its subcellular location is the cell junction. The protein localises to the focal adhesion. Its pathway is protein modification; protein ubiquitination. Functionally, substrate-recognition component of a DCX (DDB1-CUL4-X-box) E3 ubiquitin-protein ligase complex involved in cell cycle control and autophagy. The DCX(AMBRA1) complex specifically mediates the polyubiquitination of target proteins. Acts as an upstream master regulator of the transition from G1 to S cell phase: ambra1b specifically recognizes and binds phosphorylated cyclin-D (ccnd1, ccnd2 and ccnd3), leading to cyclin-D ubiquitination by the DCX(AMBRA1) complex and subsequent degradation. Acts as a regulator of Cul5-RING (CRL5) E3 ubiquitin-protein ligase complexes by mediating ubiquitination and degradation of Elongin-C (eloc) component of CRL5 complexes. Acts as a key regulator of autophagy by modulating the BECN1-PIK3C3 complex: controls protein turnover during neuronal development, and regulates normal cell survival and proliferation. In normal conditions, ambra1b is tethered to the cytoskeleton via interaction with dyneins light chains. Upon autophagy induction, ambra1b is released from the cytoskeletal docking site to induce autophagosome nucleation by mediating ubiquitination of proteins involved in autophagy. Also acts as an activator of mitophagy. Required for skeletal muscle development. This is Activating molecule in BECN1-regulated autophagy protein 1B from Danio rerio (Zebrafish).